A 476-amino-acid chain; its full sequence is Serine protease HTRA4 (476 aa).

The signal sequence occupies residues 1–31 (MIRPQLRTAGLGRCLLPGLLLLLVPVLWAGA). The IGFBP N-terminal domain maps to 36 to 109 (TQPSCPAVCQ…PGFPSTCGCP (74 aa)). 8 cysteine pairs are disulfide-bonded: C40–C66, C44–C68, C49–C69, C55–C72, C80–C94, C88–C106, C108–C127, and C116–C152. Residues 88 to 154 (CAPGLQCLQP…VPVQWGNCGD (67 aa)) form the Kazal-like domain. Positions 202 to 362 (GSGFIVSEDG…IPSDRVRQFL (161 aa)) are serine protease. Active-site charge relay system residues include H218, D248, and S326. The PDZ domain maps to 383–474 (LQMLSLTVPL…NLLLTVIPET (92 aa)).

The protein belongs to the peptidase S1C family.

It is found in the secreted. Serine protease. The sequence is that of Serine protease HTRA4 (HTRA4) from Homo sapiens (Human).